The chain runs to 255 residues: Glutamate racemase (255 aa).

Substrate is bound by residues 7–8 (DS) and 39–40 (YG). Cysteine 70 (proton donor/acceptor) is an active-site residue. 71 to 72 (NT) serves as a coordination point for substrate. Cysteine 181 functions as the Proton donor/acceptor in the catalytic mechanism. Substrate is bound at residue 182–183 (TH).

The protein belongs to the aspartate/glutamate racemases family.

The enzyme catalyses L-glutamate = D-glutamate. Its pathway is cell wall biogenesis; peptidoglycan biosynthesis. Its function is as follows. Provides the (R)-glutamate required for cell wall biosynthesis. The protein is Glutamate racemase of Helicobacter pylori (strain ATCC 700392 / 26695) (Campylobacter pylori).